We begin with the raw amino-acid sequence, 502 residues long: Thermosome subunit beta (502 aa).

This sequence belongs to the TCP-1 chaperonin family. In terms of assembly, forms a Heterooligomeric complex of two stacked eight-membered rings.

Its function is as follows. Molecular chaperone; binds unfolded polypeptides in vitro, and has a weak ATPase activity. The chain is Thermosome subunit beta (thsB) from Desulfurococcus mucosus (Desulfurococcus mobilis).